A 612-amino-acid polypeptide reads, in one-letter code: Citryl-spermidine/3,4-dihydroxybenzoyl-citryl-spermidine:spermidine ligase (612 aa).

Residues 282–284 (SMR), lysine 298, arginine 310, tyrosine 390, and glutamate 461 each bind ATP.

The protein belongs to the IucA/IucC family. As to quaternary structure, homodimer.

The enzyme catalyses N(8)-citryl-spermidine + spermidine + ATP = N(8),N'(8)-citryl-bis(spermidine) + AMP + diphosphate + H(+). The catalysed reaction is N(1)-(3,4-dihydroxybenzoyl)-N(8)-citryl-spermidine + spermidine + ATP = N(1)-(3,4-dihydroxybenzoyl)-N(8),N'(8)-citryl-bis(spermidine) + AMP + diphosphate + H(+). It participates in siderophore biosynthesis; petrobactin biosynthesis. In terms of biological role, involved in the biosynthesis of petrobactin, a catecholate siderophore that functions in both iron acquisition and virulence. Catalyzes the ATP-dependent condensation of spermidine with N(8)-citryl-spermidine or N(1)-(3,4-dihydroxbenzoyl)-N(8)-citryl-spermidine, two intermediates in petrobactin biosynthesis pathway. The protein is Citryl-spermidine/3,4-dihydroxybenzoyl-citryl-spermidine:spermidine ligase of Bacillus anthracis.